A 410-amino-acid chain; its full sequence is MYHRNSAPPPPGWSGGYPPPQSQWPPHSYQYPPYPPQGPPPPPAHSYSPPPTYGNYPSPYSTPPPHSPSPYQHPQHGHSRSWTNPSLPPRPPRESQSFGKGAPSNYRFQYSECTGRRRALLIGINYIGQPNQLRGCINDVTNMSTFLHERFGYRREDMVILTDDQKNPMSVPTKINILRAMQWLVKDAQPNDSLFIHFSGHGGRTPDLDGDEEDGYDDVIYPVDYRVAGHIVDDEMHNIMVRPLQPGVRLTAIFDSCHSGTALDLPYVYSTQGILKEPNLAKEAAQDLFSALASYGKGDLSGVAMTAIGFLKKAAIGDSARQRTVMTKTSPADVVMFSGSKDTQTSADTFQDGEARGALSWAFIKSQKQRPNQSYLQLLNSIRAELEGKYTQKPQLSCSHPLDVNLLFVM.

The interval M1–Y106 is disordered. Pro residues-rich tracts occupy residues A7–Q23 and P32–T52. Active-site residues include H201 and C257.

Belongs to the peptidase C14B family.

In terms of biological role, involved in cell death (apoptosis). The chain is Metacaspase-1B (casB) from Aspergillus clavatus (strain ATCC 1007 / CBS 513.65 / DSM 816 / NCTC 3887 / NRRL 1 / QM 1276 / 107).